The following is an 894-amino-acid chain: Phosphoenolpyruvate carboxylase (894 aa).

Catalysis depends on residues His143 and Lys556.

The protein belongs to the PEPCase type 1 family. Mg(2+) is required as a cofactor.

It catalyses the reaction oxaloacetate + phosphate = phosphoenolpyruvate + hydrogencarbonate. Forms oxaloacetate, a four-carbon dicarboxylic acid source for the tricarboxylic acid cycle. In Acinetobacter baylyi (strain ATCC 33305 / BD413 / ADP1), this protein is Phosphoenolpyruvate carboxylase.